A 446-amino-acid chain; its full sequence is Gamma-glutamyl phosphate reductase (446 aa).

The protein belongs to the gamma-glutamyl phosphate reductase family.

Its subcellular location is the cytoplasm. It catalyses the reaction L-glutamate 5-semialdehyde + phosphate + NADP(+) = L-glutamyl 5-phosphate + NADPH + H(+). The protein operates within amino-acid biosynthesis; L-proline biosynthesis; L-glutamate 5-semialdehyde from L-glutamate: step 2/2. Catalyzes the NADPH-dependent reduction of L-glutamate 5-phosphate into L-glutamate 5-semialdehyde and phosphate. The product spontaneously undergoes cyclization to form 1-pyrroline-5-carboxylate. This Sulfurihydrogenibium sp. (strain YO3AOP1) protein is Gamma-glutamyl phosphate reductase.